Here is a 431-residue protein sequence, read N- to C-terminus: Reticulon-like protein B17 (431 aa).

Disordered stretches follow at residues 1–110 (MEST…SEAV) and 126–152 (PPRK…SSSD). Residues 12–26 (TKSASRLQDSSNPPN) show a composition bias toward polar residues. Basic residues predominate over residues 126-138 (PPRKRKTNGRPKK). A compositionally biased stretch (polar residues) spans 142–152 (SSAPPLCSSSD). Residues 168–355 (ISDLVMWRDV…VTAFWNLTSI (188 aa)) form the Reticulon domain. 4 helical membrane passes run 177 to 197 (VAKS…SCFA), 202 to 222 (FSVF…SFLS), 286 to 306 (YGHL…SFTI), and 349 to 369 (FWNL…LVIF). The span at 382 to 415 (EVEPVENEQEEETLPQEEETVPQEEETVPQEEEQ) shows a compositional bias: acidic residues. Residues 382–422 (EVEPVENEQEEETLPQEEETVPQEEETVPQEEEQTQPSEER) form a disordered region.

The protein localises to the endoplasmic reticulum membrane. This chain is Reticulon-like protein B17 (RTNLB17), found in Arabidopsis thaliana (Mouse-ear cress).